Consider the following 492-residue polypeptide: E1B 55 kDa protein (492 aa).

Positions 22 to 112 (ENMEGSQDED…ERNPSGNNSR (91 aa)) are disordered. The segment covering 34-44 (RLLASAASGSS) has biased composition (low complexity). A phosphoserine mark is found at Ser486 and Ser487. Thr491 carries the post-translational modification Phosphothreonine.

It belongs to the adenoviridae E1B 55 kDa protein family. Interacts with host PML-4 and PML-5; this interaction promotes efficient subnuclear targeting of E1B-55K to PML nuclear bodies. Interacts with E4-ORF3 protein. Interacts with E4-ORF6 protein.

The protein resides in the host nucleus. The protein localises to the host cytoplasm. In terms of biological role, plays a major role to prevent cellular inhibition of viral genome replication. Assembles an SCF-like E3 ubiquitin ligase complex based on the cellular proteins ELOB, ELOC, CUL5 and RBX1, in cooperation with viral E4orf6. This viral RING-type ligase ubiquitinates cellular substrates and targets them to proteasomal degradation: TP53/p53, LIG4, MRE11-RAD50-NBS1 (MRN) complex, ITGA3, DAXX and BLM. E1B-55K probably acts as the substrate-specific adapter of the SCF-like E3 ubiquitin ligase complex. Degradation of host TP53/p53 activity is essential for preventing E1A-induced TP53 accumulation that would otherwise lead to cell apoptosis and growth arrest. E1B-55K also inactivates TP53 transcription-factor activity by binding its transactivation domain. E1B-55K also functions as a SUMO1 E3 ligase for TP53 which causes the latter to be sequestered in promyelocytic leukemia (PML) nuclear bodies thereby contributing to maximal inhibition of TP53 function. The chain is E1B 55 kDa protein from Human adenovirus B serotype 7 (HAdV-7).